The following is a 456-amino-acid chain: Potassium voltage-gated channel subfamily A member 7 (456 aa).

A helical transmembrane segment spans residues 144 to 164; it reads VLAVVSVLVILVSIVVFCLET. Residue Asn-191 is glycosylated (N-linked (GlcNAc...) asparagine). A helical membrane pass occupies residues 209–229; the sequence is FFVVETLCICWFSFELLVRLL. Residue Cys-231 is the site of S-palmitoyl cysteine attachment. Residues 241–261 form a helical membrane-spanning segment; that stretch reads VMNLIDFVAILPYFVALGTEL. Residues 276–295 traverse the membrane as a helical; Voltage-sensor segment; the sequence is ILRVIRLVRVFRIFKLSRHS. A helical membrane pass occupies residues 312-332; it reads LGLLIFFLFIGVVLFSSAVYF. The short motif at 358–363 is the Selectivity filter element; it reads TVGYGD. A helical transmembrane segment spans residues 373–393; it reads IVGSLCAIAGVLTISLPVPVI.

It belongs to the potassium channel family. A (Shaker) (TC 1.A.1.2) subfamily. Kv1.7/KCNA7 sub-subfamily. As to quaternary structure, heterotetramer of potassium channel proteins. As to expression, highly expressed in skeletal muscle, heart and kidney.

The protein resides in the membrane. The enzyme catalyses K(+)(in) = K(+)(out). Its function is as follows. Mediates the voltage-dependent potassium ion permeability of excitable membranes. Assuming opened or closed conformations in response to the voltage difference across the membrane, the protein forms a potassium-selective channel through which potassium ions may pass in accordance with their electrochemical gradient. The protein is Potassium voltage-gated channel subfamily A member 7 (KCNA7) of Homo sapiens (Human).